Reading from the N-terminus, the 371-residue chain is Tetraacyldisaccharide 4'-kinase (371 aa).

Residue alanine 63–threonine 70 coordinates ATP.

Belongs to the LpxK family.

The enzyme catalyses a lipid A disaccharide + ATP = a lipid IVA + ADP + H(+). It participates in glycolipid biosynthesis; lipid IV(A) biosynthesis; lipid IV(A) from (3R)-3-hydroxytetradecanoyl-[acyl-carrier-protein] and UDP-N-acetyl-alpha-D-glucosamine: step 6/6. Its function is as follows. Transfers the gamma-phosphate of ATP to the 4'-position of a tetraacyldisaccharide 1-phosphate intermediate (termed DS-1-P) to form tetraacyldisaccharide 1,4'-bis-phosphate (lipid IVA). The chain is Tetraacyldisaccharide 4'-kinase from Anaeromyxobacter sp. (strain Fw109-5).